The following is a 102-amino-acid chain: Urease subunit beta (102 aa).

Belongs to the urease beta subunit family. Heterotrimer of UreA (gamma), UreB (beta) and UreC (alpha) subunits. Three heterotrimers associate to form the active enzyme.

It is found in the cytoplasm. The catalysed reaction is urea + 2 H2O + H(+) = hydrogencarbonate + 2 NH4(+). It participates in nitrogen metabolism; urea degradation; CO(2) and NH(3) from urea (urease route): step 1/1. The polypeptide is Urease subunit beta (Acinetobacter baylyi (strain ATCC 33305 / BD413 / ADP1)).